We begin with the raw amino-acid sequence, 163 residues long: Phosphopantetheine adenylyltransferase (163 aa).

Ser-11 provides a ligand contact to substrate. ATP-binding positions include 11–12 and His-19; that span reads SF. Substrate-binding residues include Lys-43, Leu-75, and Arg-89. Residues 90–92, Glu-100, and 125–131 each bind ATP; these read GLR and YSFLSSS.

The protein belongs to the bacterial CoaD family. In terms of assembly, homohexamer. The cofactor is Mg(2+).

The protein localises to the cytoplasm. It catalyses the reaction (R)-4'-phosphopantetheine + ATP + H(+) = 3'-dephospho-CoA + diphosphate. It participates in cofactor biosynthesis; coenzyme A biosynthesis; CoA from (R)-pantothenate: step 4/5. Its function is as follows. Reversibly transfers an adenylyl group from ATP to 4'-phosphopantetheine, yielding dephospho-CoA (dPCoA) and pyrophosphate. The protein is Phosphopantetheine adenylyltransferase of Lysinibacillus sphaericus (strain C3-41).